The following is a 243-amino-acid chain: NEDD4-binding protein 2-like 1 (243 aa).

Residues 1–38 (MEDSFLQSFGRLSLQPQQQQQRQRPPRPPPRGTPPRRH) form a disordered region.

As to quaternary structure, interacts with dynactin subunit proteins, including DCTN4, DCTN5 and DCTN5.

Its function is as follows. Might play a role in adipocyte differentiation and triglyceride accumulation. The sequence is that of NEDD4-binding protein 2-like 1 (N4BP2L1) from Homo sapiens (Human).